Consider the following 205-residue polypeptide: uncharacterized protein (205 aa).

Catalysis depends on charge relay system residues Ser-119 and His-160.

Belongs to the peptidase S51 family.

This is an uncharacterized protein from Listeria monocytogenes serovar 1/2a (strain ATCC BAA-679 / EGD-e).